The following is an 80-amino-acid chain: UPF0248 protein M1425_2629 (80 aa).

The protein belongs to the UPF0248 family.

This Saccharolobus islandicus (strain M.14.25 / Kamchatka #1) (Sulfolobus islandicus) protein is UPF0248 protein M1425_2629.